We begin with the raw amino-acid sequence, 682 residues long: Potassium-transporting ATPase ATP-binding subunit (682 aa).

The next 4 helical transmembrane spans lie at 34–54 (PVMF…LAMV), 58–78 (IAGS…TVLF), 219–239 (IALT…TATL), and 254–274 (VLVA…LSAI). D307 functions as the 4-aspartylphosphate intermediate in the catalytic mechanism. ATP contacts are provided by residues D344, E348, 377–384 (FTAQSRMS), and K395. The Mg(2+) site is built by D518 and D522. Transmembrane regions (helical) follow at residues 588-608 (FAII…LNVM), 616-636 (AILS…PLAL), and 662-682 (LVVP…LGLA).

This sequence belongs to the cation transport ATPase (P-type) (TC 3.A.3) family. Type IA subfamily. The system is composed of three essential subunits: KdpA, KdpB and KdpC.

The protein resides in the cell inner membrane. The catalysed reaction is K(+)(out) + ATP + H2O = K(+)(in) + ADP + phosphate + H(+). Its function is as follows. Part of the high-affinity ATP-driven potassium transport (or Kdp) system, which catalyzes the hydrolysis of ATP coupled with the electrogenic transport of potassium into the cytoplasm. This subunit is responsible for energy coupling to the transport system and for the release of the potassium ions to the cytoplasm. This is Potassium-transporting ATPase ATP-binding subunit from Salmonella choleraesuis (strain SC-B67).